Consider the following 267-residue polypeptide: Cell division protein FtsQ (267 aa).

Topologically, residues 1–32 are cytoplasmic; it reads MRKKTSSNKKNTAKKNNNISLHRKLGLIYKKT. A helical transmembrane segment spans residues 33-53; sequence ILILKIVLIIFICLFAFTKYF. Topologically, residues 54-267 are periplasmic; it reads ASLKSYLKTN…DKNKYYIEKY (214 aa). Positions 73-141 constitute a POTRA domain; that stretch reads FKLENVIIEG…STIYIKLFER (69 aa).

This sequence belongs to the FtsQ/DivIB family. FtsQ subfamily.

Its subcellular location is the cell inner membrane. In terms of biological role, essential cell division protein. In Rickettsia bellii (strain RML369-C), this protein is Cell division protein FtsQ.